Here is a 214-residue protein sequence, read N- to C-terminus: Ribosomal RNA small subunit methyltransferase G (214 aa).

S-adenosyl-L-methionine is bound by residues glycine 78, leucine 83, 129-130 (AE), and arginine 144.

It belongs to the methyltransferase superfamily. RNA methyltransferase RsmG family.

Its subcellular location is the cytoplasm. It carries out the reaction guanosine(527) in 16S rRNA + S-adenosyl-L-methionine = N(7)-methylguanosine(527) in 16S rRNA + S-adenosyl-L-homocysteine. Specifically methylates the N7 position of guanine in position 527 of 16S rRNA. The protein is Ribosomal RNA small subunit methyltransferase G of Marinobacter nauticus (strain ATCC 700491 / DSM 11845 / VT8) (Marinobacter aquaeolei).